Consider the following 398-residue polypeptide: Phosphoglycerate kinase (398 aa).

Residues 21–23, Arg36, 59–62, Arg119, and Arg157 each bind substrate; these read DFN and HLGR. Residues Lys208, Gly296, Glu327, and 354–357 each bind ATP; that span reads GGDS.

This sequence belongs to the phosphoglycerate kinase family. As to quaternary structure, monomer.

Its subcellular location is the cytoplasm. The catalysed reaction is (2R)-3-phosphoglycerate + ATP = (2R)-3-phospho-glyceroyl phosphate + ADP. Its pathway is carbohydrate degradation; glycolysis; pyruvate from D-glyceraldehyde 3-phosphate: step 2/5. The polypeptide is Phosphoglycerate kinase (Streptococcus pneumoniae serotype 4 (strain ATCC BAA-334 / TIGR4)).